A 172-amino-acid chain; its full sequence is Shikimate kinase (172 aa).

G11–A16 is a binding site for ATP. T15 contributes to the Mg(2+) binding site. Residues D33, R57, and G79 each contribute to the substrate site. R117 lines the ATP pocket. R136 provides a ligand contact to substrate.

The protein belongs to the shikimate kinase family. As to quaternary structure, monomer. Mg(2+) serves as cofactor.

It is found in the cytoplasm. The catalysed reaction is shikimate + ATP = 3-phosphoshikimate + ADP + H(+). Its pathway is metabolic intermediate biosynthesis; chorismate biosynthesis; chorismate from D-erythrose 4-phosphate and phosphoenolpyruvate: step 5/7. In terms of biological role, catalyzes the specific phosphorylation of the 3-hydroxyl group of shikimic acid using ATP as a cosubstrate. The polypeptide is Shikimate kinase (Pelotomaculum thermopropionicum (strain DSM 13744 / JCM 10971 / SI)).